Consider the following 530-residue polypeptide: Estrogen receptor beta (530 aa).

Residues 1–148 (MEIKNSPSSL…SPNAKRDAHF (148 aa)) are modulating. S61 carries the post-translational modification Phosphoserine; alternate. S61 carries O-linked (GlcNAc) serine; alternate glycosylation. Phosphoserine; by MAPK is present on residues S87 and S105. NR C4-type zinc fingers lie at residues 149–169 (CPVC…CEGC) and 185–209 (CPAT…LRKC). Residues 149–214 (CPVCSDYASG…RLRKCYEVGM (66 aa)) constitute a DNA-binding region (nuclear receptor). An NR LBD domain is found at 264-498 (SPEQLVLTLL…DLLLEMLNAH (235 aa)). Positions 506–515 (SISGSECSST) are enriched in low complexity. The interval 506–530 (SISGSECSSTEDSKNKESSQNLQSQ) is disordered.

This sequence belongs to the nuclear hormone receptor family. NR3 subfamily. In terms of assembly, binds DNA as a homodimer. Can form a heterodimer with ESR1. Interacts with NCOA1, NCOA3, NCOA5 and NCOA6 coactivators, leading to a strong increase of transcription of target genes. Interacts with UBE1C and AKAP13. Interacts with DNTTIP2. Interacts with CCDC62 in the presence of estradiol/E2; this interaction seems to enhance the transcription of target genes. Interacts with PRMT2. Interacts with CCAR2 (via N-terminus) in a ligand-independent manner. Interacts with DNAAF4. Interacts with RBM39, in the presence of estradiol (E2). Interacts with STUB1/CHIP. In terms of processing, phosphorylation at Ser-87 and Ser-105 recruits NCOA1. In terms of tissue distribution, expressed in the CA1 region of the hippocampus, expression decreases with age (at protein level). Expressed in prostate, ovary, lung, liver, kidney, fat, bone, brain, uterus and testis.

Its subcellular location is the nucleus. Functionally, nuclear hormone receptor. Binds estrogens with an affinity similar to that of ESR1/ER-alpha, and activates expression of reporter genes containing estrogen response elements (ERE) in an estrogen-dependent manner. Its function is as follows. Lacks ligand binding affinity and suppresses ESR1/ER-alpha and ESR2 isoform 1/ER-beta1 mediated transcriptional activation and may act as a dominant negative regulator of estrogen action. In terms of biological role, unable to bind DNA and activate transcription due to the truncation of the DNA binding domain. The protein is Estrogen receptor beta (Esr2) of Rattus norvegicus (Rat).